We begin with the raw amino-acid sequence, 161 residues long: MAKKKSKDKAGSNTIAMNKQARHEYFIDDEIEAGIELQGWEVKSLRSGKVNIAESYVYVRDGEIFISGMTITPLQAASTHVVANPTRIRKLLMSRKEIDNLIGRVNREGMTLVATTMYWVRSWAKIKVGVAKGKKLHDKRTDSKEKDWNRDKARIMKSSLR.

The segment at 138–161 is disordered; it reads DKRTDSKEKDWNRDKARIMKSSLR. Basic and acidic residues predominate over residues 139-154; the sequence is KRTDSKEKDWNRDKAR.

It belongs to the SmpB family.

It is found in the cytoplasm. Functionally, required for rescue of stalled ribosomes mediated by trans-translation. Binds to transfer-messenger RNA (tmRNA), required for stable association of tmRNA with ribosomes. tmRNA and SmpB together mimic tRNA shape, replacing the anticodon stem-loop with SmpB. tmRNA is encoded by the ssrA gene; the 2 termini fold to resemble tRNA(Ala) and it encodes a 'tag peptide', a short internal open reading frame. During trans-translation Ala-aminoacylated tmRNA acts like a tRNA, entering the A-site of stalled ribosomes, displacing the stalled mRNA. The ribosome then switches to translate the ORF on the tmRNA; the nascent peptide is terminated with the 'tag peptide' encoded by the tmRNA and targeted for degradation. The ribosome is freed to recommence translation, which seems to be the essential function of trans-translation. The chain is SsrA-binding protein from Aliivibrio fischeri (strain MJ11) (Vibrio fischeri).